Reading from the N-terminus, the 560-residue chain is Muellerian-inhibiting factor (560 aa).

An N-terminal signal peptide occupies residues 1-24 (MRDLPLTSLALVLSALGALLGTEA). Residues 25 to 451 (LRAEEPAVGT…DPRGPGRAQR (427 aa)) constitute a propeptide that is removed on maturation. Residue Asn64 is glycosylated (N-linked (GlcNAc...) asparagine). Positions 259–287 (PLPAHGQLDTVPFPPPRPSAELEESPPSA) are disordered. The N-linked (GlcNAc...) asparagine glycan is linked to Asn329. Disulfide bonds link Cys462–Cys526, Cys488–Cys557, and Cys492–Cys559.

This sequence belongs to the TGF-beta family. As to quaternary structure, homodimer; disulfide-linked. Preproprotein is proteolytically processed to generate N- and C-terminal cleavage products that homodimerize and associate to form a biologically active non-covalent complex. Binding of the non-covalent complex to AMHR2 induces dissociation of the pro-region from the mature C-terminal dimer. The N-terminal portion of the protein, despite having no intrinsic activity, has the role of amplifying the activity of the C-terminus. As to expression, in ovaries, AMH is detected in granulosa cells of early growing follicles.

It is found in the secreted. In terms of biological role, plays an important role in several reproductive functions. Induces Muellerian duct regression during male fetal sexual differentiation. Also plays a role in Leydig cell differentiation and function. In female acts as a negative regulator of the primordial to primary follicle transition and decreases FSH sensitivity of growing follicles. AMH signals by binding to a specific type-II receptor, AMHR2, that heterodimerizes with type-I receptors (ACVR1 and BMPR1A), and recruiting SMAD proteins that are translocated to the nucleus to regulate target gene expression. In Homo sapiens (Human), this protein is Muellerian-inhibiting factor.